The following is a 295-amino-acid chain: MDKVKLERMKNDKGFIAALDQSGGSTPKALAAYGVPETAYSNEKEMFDLVHAMRTRIITGKAFNSNNILGAILFEQTMEREIEGMPTADFLWEKKKILPFLKVDKGLADLKDGVQLMKPIPNLDAMLKHAVEKHIFGTKMRSVIKEANPKGIKAVVDQQFELGIQIAKAGLVPIIEPEVDIKSPDKAKCEEILKKELEEHLKTLPKDLLVMFKLSIPTKENLYEEFTKHPQVVRVVALSGGYSRDDANKLLAKNRGMIASFSRALAEGLFASQSDAEFNATLEKTIKGVYEASIT.

Residue glutamate 176 is the Proton acceptor of the active site. Lysine 213 serves as the catalytic Schiff-base intermediate with dihydroxyacetone-P.

The protein belongs to the class I fructose-bisphosphate aldolase family.

The catalysed reaction is beta-D-fructose 1,6-bisphosphate = D-glyceraldehyde 3-phosphate + dihydroxyacetone phosphate. It functions in the pathway carbohydrate degradation; glycolysis; D-glyceraldehyde 3-phosphate and glycerone phosphate from D-glucose: step 4/4. The polypeptide is Fructose-bisphosphate aldolase class 1 (Treponema denticola (strain ATCC 35405 / DSM 14222 / CIP 103919 / JCM 8153 / KCTC 15104)).